The following is a 288-amino-acid chain: Bifunctional protein FolD (288 aa).

Residues 166–168, Ser-191, and Val-232 each bind NADP(+); that span reads GRS.

This sequence belongs to the tetrahydrofolate dehydrogenase/cyclohydrolase family. In terms of assembly, homodimer.

The catalysed reaction is (6R)-5,10-methylene-5,6,7,8-tetrahydrofolate + NADP(+) = (6R)-5,10-methenyltetrahydrofolate + NADPH. It carries out the reaction (6R)-5,10-methenyltetrahydrofolate + H2O = (6R)-10-formyltetrahydrofolate + H(+). It functions in the pathway one-carbon metabolism; tetrahydrofolate interconversion. In terms of biological role, catalyzes the oxidation of 5,10-methylenetetrahydrofolate to 5,10-methenyltetrahydrofolate and then the hydrolysis of 5,10-methenyltetrahydrofolate to 10-formyltetrahydrofolate. The chain is Bifunctional protein FolD from Roseiflexus sp. (strain RS-1).